Here is a 404-residue protein sequence, read N- to C-terminus: LL-diaminopimelate aminotransferase (404 aa).

Substrate contacts are provided by Tyr15 and Gly42. Pyridoxal 5'-phosphate contacts are provided by residues Tyr72, 108-109 (AK), Tyr132, Asn188, Tyr219, and 247-249 (SFS). Positions 109, 132, and 188 each coordinate substrate. N6-(pyridoxal phosphate)lysine is present on Lys250. Residues Arg258 and Asn288 each contribute to the pyridoxal 5'-phosphate site. Residues Asn288 and Arg384 each coordinate substrate.

This sequence belongs to the class-I pyridoxal-phosphate-dependent aminotransferase family. LL-diaminopimelate aminotransferase subfamily. Homodimer. Pyridoxal 5'-phosphate serves as cofactor.

It catalyses the reaction (2S,6S)-2,6-diaminopimelate + 2-oxoglutarate = (S)-2,3,4,5-tetrahydrodipicolinate + L-glutamate + H2O + H(+). Its pathway is amino-acid biosynthesis; L-lysine biosynthesis via DAP pathway; LL-2,6-diaminopimelate from (S)-tetrahydrodipicolinate (aminotransferase route): step 1/1. Involved in the synthesis of meso-diaminopimelate (m-DAP or DL-DAP), required for both lysine and peptidoglycan biosynthesis. Catalyzes the direct conversion of tetrahydrodipicolinate to LL-diaminopimelate. The sequence is that of LL-diaminopimelate aminotransferase from Lachnoclostridium phytofermentans (strain ATCC 700394 / DSM 18823 / ISDg) (Clostridium phytofermentans).